Here is a 38-residue protein sequence, read N- to C-terminus: MKNTNPNSQPVELNRTSLFLGRLLIFVLGILFSSYIFN.

A helical transmembrane segment spans residues 17 to 37 (SLFLGRLLIFVLGILFSSYIF).

The protein belongs to the PsbL family. PSII is composed of 1 copy each of membrane proteins PsbA, PsbB, PsbC, PsbD, PsbE, PsbF, PsbH, PsbI, PsbJ, PsbK, PsbL, PsbM, PsbT, PsbX, PsbY, PsbZ, Psb30/Ycf12, peripheral proteins PsbO, CyanoQ (PsbQ), PsbU, PsbV and a large number of cofactors. It forms dimeric complexes.

It localises to the cellular thylakoid membrane. Functionally, one of the components of the core complex of photosystem II (PSII). PSII is a light-driven water:plastoquinone oxidoreductase that uses light energy to abstract electrons from H(2)O, generating O(2) and a proton gradient subsequently used for ATP formation. It consists of a core antenna complex that captures photons, and an electron transfer chain that converts photonic excitation into a charge separation. This subunit is found at the monomer-monomer interface and is required for correct PSII assembly and/or dimerization. The polypeptide is Photosystem II reaction center protein L (Prochlorothrix hollandica).